The following is a 542-amino-acid chain: MIMGGVRELLLVVMTVGVVKVSCYPVGKSQKQDQVSLQRRLGELSSNDVSIVHALALLRSIGSDAKQAREEYLETNEVESQASPNHGSSPANDALSSEEKLRRVSSDDAATSEAATGPSGDDATSEAATGPSGDDATSEAATGPSGDDATSEAATGPSGDDATSEAATGPSGDDATSEAATGPSGDDATSEAATGPSGDDATSEAATGPSGDDATSEAATGPSGDDATSEAATGPSGDDATSEAATGPSGDDATSEAATGPSGDDATSEAATGPSGDDATSEAATGPSGDDATSEAATGPSGDDATSEAATGPSGDDATSEAATGPSGDDATSEAATGPSGDDATSEAATGPSGDDATSEAATGPSGDDATSEAATGPSGDDATSEAATGPSGDDATSEAATGPSGDDATSEAATGPSGDDATSEAATGPSGDDATSEAATGPSGDDATSEAATGPSGDDATSEAATGPSGDDATSEAATGPSGDDATSEAATGPSGDDATSEAATGPSGDDATSEAATGPSGDDATSEAATGPSGDDAMDI.

Positions M1 to V21 are cleaved as a signal peptide. Positions S22–G120 are excised as a propeptide. A disordered region spans residues E70–I542. Over residues V78 to L95 the composition is skewed to polar residues. Over residues S97 to S106 the composition is skewed to basic and acidic residues. Low complexity predominate over residues D107–T116. Repeat copies occupy residues D121 to G133, D134 to G146, D147 to G159, D160 to G172, D173 to G185, D186 to G198, D199 to G211, D212 to G224, D225 to G237, D238 to G250, D251 to G263, D264 to G276, D277 to G289, D290 to G302, D303 to G315, D316 to G328, D329 to G341, D342 to G354, D355 to G367, D368 to G380, D381 to G393, D394 to G406, D407 to G419, D420 to G432, D433 to G445, D446 to G458, D459 to G471, D472 to G484, D485 to G497, D498 to G510, D511 to G523, and D524 to G536. Residues D121 to G536 are 32 X 13 AA tandem repeats of D-D-A-T-S-E-A-A-T-G-P-S-G. T124 carries an O-linked (GalNAc...) threonine glycan. A glycan (O-linked (GalNAc...) serine) is linked at S125. O-linked (GalNAc...) threonine glycosylation is found at T129 and T137. O-linked (GalNAc...) serine glycosylation is present at S138. T142 and T150 each carry an O-linked (GalNAc...) threonine glycan. O-linked (GalNAc...) serine glycosylation is present at S151. O-linked (GalNAc...) threonine glycosylation is found at T155 and T163. An O-linked (GalNAc...) serine glycan is attached at S164. O-linked (GalNAc...) threonine glycosylation is found at T168 and T176. S177 is a glycosylation site (O-linked (GalNAc...) serine). O-linked (GalNAc...) threonine glycans are attached at residues T181 and T189. An O-linked (GalNAc...) serine glycan is attached at S190. O-linked (GalNAc...) threonine glycosylation is found at T194 and T202. S203 carries O-linked (GalNAc...) serine glycosylation. O-linked (GalNAc...) threonine glycans are attached at residues T207 and T215. S216 is a glycosylation site (O-linked (GalNAc...) serine). 2 O-linked (GalNAc...) threonine glycosylation sites follow: T220 and T228. O-linked (GalNAc...) serine glycosylation occurs at S229. T233 and T241 each carry an O-linked (GalNAc...) threonine glycan. A glycan (O-linked (GalNAc...) serine) is linked at S242. O-linked (GalNAc...) threonine glycosylation is found at T246 and T254. S255 carries O-linked (GalNAc...) serine glycosylation. 2 O-linked (GalNAc...) threonine glycosylation sites follow: T259 and T267. S268 carries O-linked (GalNAc...) serine glycosylation. O-linked (GalNAc...) threonine glycans are attached at residues T272 and T280. O-linked (GalNAc...) serine glycosylation occurs at S281. O-linked (GalNAc...) threonine glycans are attached at residues T285 and T293. S294 carries O-linked (GalNAc...) serine glycosylation. T298 and T306 each carry an O-linked (GalNAc...) threonine glycan. S307 carries O-linked (GalNAc...) serine glycosylation. T311 and T319 each carry an O-linked (GalNAc...) threonine glycan. S320 is a glycosylation site (O-linked (GalNAc...) serine). O-linked (GalNAc...) threonine glycans are attached at residues T324 and T332. An O-linked (GalNAc...) serine glycan is attached at S333. 2 O-linked (GalNAc...) threonine glycosylation sites follow: T337 and T345. An O-linked (GalNAc...) serine glycan is attached at S346. T350 and T358 each carry an O-linked (GalNAc...) threonine glycan. The O-linked (GalNAc...) serine glycan is linked to S359. O-linked (GalNAc...) threonine glycans are attached at residues T363 and T371. A glycan (O-linked (GalNAc...) serine) is linked at S372. O-linked (GalNAc...) threonine glycosylation is found at T376 and T384. O-linked (GalNAc...) serine glycosylation occurs at S385. Residues T389 and T397 are each glycosylated (O-linked (GalNAc...) threonine). S398 carries an O-linked (GalNAc...) serine glycan. O-linked (GalNAc...) threonine glycans are attached at residues T402 and T410. An O-linked (GalNAc...) serine glycan is attached at S411. O-linked (GalNAc...) threonine glycosylation is found at T415 and T423. S424 carries an O-linked (GalNAc...) serine glycan. O-linked (GalNAc...) threonine glycosylation is found at T428 and T436. A glycan (O-linked (GalNAc...) serine) is linked at S437. Residues T441 and T449 are each glycosylated (O-linked (GalNAc...) threonine). S450 is a glycosylation site (O-linked (GalNAc...) serine). Residues T454 and T462 are each glycosylated (O-linked (GalNAc...) threonine). S463 is a glycosylation site (O-linked (GalNAc...) serine). O-linked (GalNAc...) threonine glycosylation is found at T467 and T475. O-linked (GalNAc...) serine glycosylation is present at S476. 2 O-linked (GalNAc...) threonine glycosylation sites follow: T480 and T488. S489 is a glycosylation site (O-linked (GalNAc...) serine). 2 O-linked (GalNAc...) threonine glycosylation sites follow: T493 and T501. O-linked (GalNAc...) serine glycosylation occurs at S502. Residues T506 and T514 are each glycosylated (O-linked (GalNAc...) threonine). S515 carries O-linked (GalNAc...) serine glycosylation. O-linked (GalNAc...) threonine glycosylation is found at T519 and T527. O-linked (GalNAc...) serine glycosylation occurs at S528. The O-linked (GalNAc...) threonine glycan is linked to T532. A propeptide spanning residues D537 to I542 is cleaved from the precursor.

Post-translationally, most sialic acid residues exist in the form of polysialyl groups partly capped with deaminoneuraminic acid. In terms of tissue distribution, cortical alveoli of immature ovaries.

Functionally, in response to egg activation, PSGP is discharged by exocytosis into the perivitelline space, where it undergoes rapid proteolysis into glycotridecapeptides. During fertilization and/or early development the glycotridecapeptides prevent polyspermy or are involved in the formation of a fertilization membrane. In Oncorhynchus mykiss (Rainbow trout), this protein is Polysialoglycoprotein.